A 308-amino-acid chain; its full sequence is Methionyl-tRNA formyltransferase (308 aa).

110–113 (SLLP) is a (6S)-5,6,7,8-tetrahydrofolate binding site.

The protein belongs to the Fmt family.

The catalysed reaction is L-methionyl-tRNA(fMet) + (6R)-10-formyltetrahydrofolate = N-formyl-L-methionyl-tRNA(fMet) + (6S)-5,6,7,8-tetrahydrofolate + H(+). Functionally, attaches a formyl group to the free amino group of methionyl-tRNA(fMet). The formyl group appears to play a dual role in the initiator identity of N-formylmethionyl-tRNA by promoting its recognition by IF2 and preventing the misappropriation of this tRNA by the elongation apparatus. This chain is Methionyl-tRNA formyltransferase, found in Neisseria gonorrhoeae (strain NCCP11945).